Here is a 485-residue protein sequence, read N- to C-terminus: Cys-Gly metallodipeptidase DUG1 (485 aa).

H109 serves as a coordination point for Zn(2+). The active site involves D111. D144 is a binding site for Zn(2+). Residue E178 is the Proton acceptor of the active site. Zn(2+)-binding residues include E179, D207, and H457.

This sequence belongs to the peptidase M20A family. As to quaternary structure, homodimer. Component of the GSH degradosomal complex. Zn(2+) serves as cofactor. It depends on Mn(2+) as a cofactor.

It is found in the cytoplasm. Its function is as follows. Catalytic component of the GSH degradosomal complex involved in the degradation of glutathione (GSH) and other peptides containing a gamma-glu-X bond. Also functions as a dipeptidase with high specificity for Cys-Gly and no activity toward tri- or tetrapeptides. This Candida albicans (strain SC5314 / ATCC MYA-2876) (Yeast) protein is Cys-Gly metallodipeptidase DUG1 (DUG1).